The following is a 108-amino-acid chain: uncharacterized protein (108 aa).

Over residues 1–10 the composition is skewed to polar residues; the sequence is MSGISLTPVK. Disordered stretches follow at residues 1–63 and 83–108; these read MSGI…RPPR and VLSPRYDLSDEPHAPGTTMISGPRTQ. A compositionally biased stretch (basic and acidic residues) spans 33 to 62; the sequence is YVDRARPSADAKEHCAASDPEEWHSGDRPP.

This is an uncharacterized protein from Gallid herpesvirus 2 (strain Chicken/Md5/ATCC VR-987) (GaHV-2).